Here is a 748-residue protein sequence, read N- to C-terminus: Antigen peptide transporter 1 (748 aa).

Topologically, residues 1–15 (MASSRCPAPRGCRCL) are cytoplasmic. A helical transmembrane segment spans residues 16 to 36 (PGASLAWLGTVLLLLADWVLL). Residues 37–53 (RTALPRIFSLLVPTALP) are Lumenal-facing. Residues 54–76 (LLRVWAVGLSRWAVLWLGACGVL) form a helical membrane-spanning segment. Residues 77–92 (RATVGSKSENAGAQGW) are Cytoplasmic-facing. Residues 93-113 (LAALKPLAAALGLALPGLALF) form a helical membrane-spanning segment. Residues 114–133 (RELISWGAPGSADSTRLLHW) are Lumenal-facing. Residues 134–154 (GSHPTAFVVSYAAALPAAALW) traverse the membrane as a helical segment. Over 155-186 (HKLGSLWVPGGQGGSGNPVRRLLGCLGSETRR) the chain is Cytoplasmic. A helical transmembrane segment spans residues 187–207 (LSLFLVLVVLSSLGEMAIPFF). Residues 187 to 470 (LSLFLVLVVL…LLSIYPRVQK (284 aa)) form the ABC transmembrane type-1 domain. Residues 208–227 (TGRLTDWILQDGSADTFTRN) lie on the Lumenal side of the membrane. The helical transmembrane segment at 228–248 (LTLMSILTIASAVLEFVGDGI) threads the bilayer. Over 249-298 (YNNTMGHVHSHLQGEVFGAVLRQETEFFQQNQTGNIMSRVTEDTSTLSDS) the chain is Cytoplasmic. Residues 299-319 (LSENLSLFLWYLVRGLCLLGI) traverse the membrane as a helical segment. Residues 320 to 328 (MLWGSVSLT) are Lumenal-facing. Residues 329-349 (MVTLITLPLLFLLPKKVGKWY) traverse the membrane as a helical segment. Topologically, residues 350–418 (QLLEVQVRES…AVNSWTTSIS (69 aa)) are cytoplasmic. Residues 375–420 (PTVRSFANEEGEAQKFREKLQEIKTLNQKEAVAYAVNSWTTSISGM) are part of the peptide-binding site. The chain crosses the membrane as a helical span at residues 419-439 (GMLLKVGILYIGGQLVTSGAV). Residues 440 to 443 (SSGN) lie on the Lumenal side of the membrane. Residues 444-464 (LVTFVLYQMQFTQAVEVLLSI) traverse the membrane as a helical segment. The segment at 453-487 (QFTQAVEVLLSIYPRVQKAVGSSEKIFEYLDRTPR) is part of the peptide-binding site. At 465–748 (YPRVQKAVGS…MVQAPADAPE (284 aa)) the chain is on the cytoplasmic side. Positions 503-742 (VQFQDVSFAY…KGCYWAMVQA (240 aa)) constitute an ABC transporter domain. ATP-binding positions include 538–546 (GPNGSGKST), 641–647 (SQLSGGQ), and Gln701. Ser545 lines the Mg(2+) pocket.

Belongs to the ABC transporter superfamily. ABCB family. MHC peptide exporter (TC 3.A.1.209) subfamily. In terms of assembly, heterodimer of TAP1 and TAP2 (TAP1-TAP2). A component of the peptide loading complex (PLC), interacts via TAPBP with MHCI heterodimer; this interaction mediates peptide-MHCI assembly. Recruits TAPBP in a 1:1 stoichiometry. Interacts with classical MHCI such as HLA-A*02-B2M; this interaction is obligatory for the loading of peptide epitopes. Interacts with non-classical MHCI molecules including HLA-E-B2M and HLA-F-B2M as well as PLC component CALR before the peptide loading. Interacts with PSMB5 and PSMB8. As to quaternary structure, (Microbial infection) Interacts with Epstein-Barr virus BNLF2a. (Microbial infection) Interacts with herpes simplex virus US12/ICP47. In terms of assembly, (Microbial infection) Interacts with adenovirus E3-19K glycoprotein, which binds TAP1-TAP2 and acts as a TAPBP inhibitor, preventing TAP1-TAP2 association with MHCI. Mg(2+) is required as a cofactor. As to expression, highly expressed in professional APCs monocytes and dendritic cells as well as in lymphocyte subsets T cells, B cells and NK cells.

The protein resides in the endoplasmic reticulum membrane. The catalysed reaction is a peptide antigen(in) + ATP + H2O = a peptide antigen(out) + ADP + phosphate + H(+). Its activity is regulated as follows. Inhibited at high ER lumenal peptide concentrations. With respect to regulation, (Microbial infection) Inhibited by herpes simplex virus US12/ICP47 protein, which blocks the peptide-binding site of TAP1-TAP2. (Microbial infection) Inhibited by human cytomegalovirus US6 glycoprotein, which binds to the lumenal side of TAP1-TAP2 complex and inhibits peptide translocation by specifically blocking ATP-binding and preventing TAP1-TAP2 conformational rearrangement induced by peptide binding. In terms of biological role, ABC transporter associated with antigen processing. In complex with TAP2 mediates unidirectional translocation of peptide antigens from cytosol to endoplasmic reticulum (ER) for loading onto MHC class I (MHCI) molecules. Uses the chemical energy of ATP to export peptides against the concentration gradient. During the transport cycle alternates between 'inward-facing' state with peptide binding site facing the cytosol to 'outward-facing' state with peptide binding site facing the ER lumen. Peptide antigen binding to ATP-loaded TAP1-TAP2 induces a switch to hydrolysis-competent 'outward-facing' conformation ready for peptide loading onto nascent MHCI molecules. Subsequently ATP hydrolysis resets the transporter to the 'inward facing' state for a new cycle. Typically transports intracellular peptide antigens of 8 to 13 amino acids that arise from cytosolic proteolysis via IFNG-induced immunoproteasome. Binds peptides with free N- and C-termini, the first three and the C-terminal residues being critical. Preferentially selects peptides having a highly hydrophobic residue at position 3 and hydrophobic or charged residues at the C-terminal anchor. Proline at position 2 has the most destabilizing effect. As a component of the peptide loading complex (PLC), acts as a molecular scaffold essential for peptide-MHCI assembly and antigen presentation. The polypeptide is Antigen peptide transporter 1 (Homo sapiens (Human)).